The sequence spans 64 residues: Large ribosomal subunit protein uL30 (64 aa).

The protein belongs to the universal ribosomal protein uL30 family. In terms of assembly, part of the 50S ribosomal subunit.

This is Large ribosomal subunit protein uL30 from Syntrophus aciditrophicus (strain SB).